We begin with the raw amino-acid sequence, 131 residues long: Fumarate reductase subunit C (131 aa).

3 helical membrane-spanning segments follow: residues 30–50 (EGTAVPTVWFSIELIFGLFAL), 57–77 (WMGFVGFLQNPVVVILNLITL), and 109–129 (IIKGLWVVTAVVTVVILYVAL).

The protein belongs to the FrdC family. As to quaternary structure, part of an enzyme complex containing four subunits: a flavoprotein (FrdA), an iron-sulfur protein (FrdB), and two hydrophobic anchor proteins (FrdC and FrdD).

The protein localises to the cell inner membrane. Two distinct, membrane-bound, FAD-containing enzymes are responsible for the catalysis of fumarate and succinate interconversion; fumarate reductase is used in anaerobic growth, and succinate dehydrogenase is used in aerobic growth. Anchors the catalytic components of the fumarate reductase complex to the cell inner membrane, binds quinones. The chain is Fumarate reductase subunit C from Salmonella dublin (strain CT_02021853).